Here is a 291-residue protein sequence, read N- to C-terminus: Urease accessory protein UreD (291 aa).

It belongs to the UreD family. In terms of assembly, ureD, UreF and UreG form a complex that acts as a GTP-hydrolysis-dependent molecular chaperone, activating the urease apoprotein by helping to assemble the nickel containing metallocenter of UreC. The UreE protein probably delivers the nickel.

Its subcellular location is the cytoplasm. Required for maturation of urease via the functional incorporation of the urease nickel metallocenter. The chain is Urease accessory protein UreD from Acinetobacter baumannii (strain ACICU).